The following is a 660-amino-acid chain: Bifunctional polymyxin resistance protein ArnA (660 aa).

Positions 1 to 304 (MKTVVFAYHD…TLGLVQGSRL (304 aa)) are formyltransferase ArnAFT. Position 86 to 88 (86 to 88 (HLI)) interacts with (6R)-10-formyltetrahydrofolate. His104 (proton donor; for formyltransferase activity) is an active-site residue. Residues Arg114 and 136–140 (VKRAD) contribute to the (6R)-10-formyltetrahydrofolate site. Residues 314-660 (RRTRVLILGV…RTVDLTDKPS (347 aa)) form a dehydrogenase ArnADH region. NAD(+)-binding positions include Asp347 and 368–369 (DI). UDP-alpha-D-glucuronate-binding positions include Ala393, Tyr398, and 432–433 (TS). The active-site Proton acceptor; for decarboxylase activity is Glu434. UDP-alpha-D-glucuronate is bound by residues Arg460, Asn492, 526 to 535 (KLIDGGKQKR), and Tyr613. The active-site Proton donor; for decarboxylase activity is Arg619.

The protein in the N-terminal section; belongs to the Fmt family. UDP-L-Ara4N formyltransferase subfamily. It in the C-terminal section; belongs to the NAD(P)-dependent epimerase/dehydratase family. UDP-glucuronic acid decarboxylase subfamily. As to quaternary structure, homohexamer, formed by a dimer of trimers.

It catalyses the reaction UDP-alpha-D-glucuronate + NAD(+) = UDP-beta-L-threo-pentopyranos-4-ulose + CO2 + NADH. The enzyme catalyses UDP-4-amino-4-deoxy-beta-L-arabinose + (6R)-10-formyltetrahydrofolate = UDP-4-deoxy-4-formamido-beta-L-arabinose + (6S)-5,6,7,8-tetrahydrofolate + H(+). Its pathway is nucleotide-sugar biosynthesis; UDP-4-deoxy-4-formamido-beta-L-arabinose biosynthesis; UDP-4-deoxy-4-formamido-beta-L-arabinose from UDP-alpha-D-glucuronate: step 1/3. It participates in nucleotide-sugar biosynthesis; UDP-4-deoxy-4-formamido-beta-L-arabinose biosynthesis; UDP-4-deoxy-4-formamido-beta-L-arabinose from UDP-alpha-D-glucuronate: step 3/3. It functions in the pathway bacterial outer membrane biogenesis; lipopolysaccharide biosynthesis. In terms of biological role, bifunctional enzyme that catalyzes the oxidative decarboxylation of UDP-glucuronic acid (UDP-GlcUA) to UDP-4-keto-arabinose (UDP-Ara4O) and the addition of a formyl group to UDP-4-amino-4-deoxy-L-arabinose (UDP-L-Ara4N) to form UDP-L-4-formamido-arabinose (UDP-L-Ara4FN). The modified arabinose is attached to lipid A and is required for resistance to polymyxin and cationic antimicrobial peptides. This is Bifunctional polymyxin resistance protein ArnA from Escherichia coli (strain K12 / MC4100 / BW2952).